The sequence spans 247 residues: Small ribosomal subunit protein uS3 (247 aa).

The KH type-2 domain maps to 51-119 (VAKRDKRPAG…ELHLNIVEIR (69 aa)). Residues 224 to 233 (PSAHDRRQQE) show a composition bias toward basic and acidic residues. The interval 224–247 (PSAHDRRQQELQESGGASRPRRDR) is disordered.

This sequence belongs to the universal ribosomal protein uS3 family. Part of the 30S ribosomal subunit. Forms a tight complex with proteins S10 and S14.

In terms of biological role, binds the lower part of the 30S subunit head. Binds mRNA in the 70S ribosome, positioning it for translation. In Jannaschia sp. (strain CCS1), this protein is Small ribosomal subunit protein uS3.